Reading from the N-terminus, the 248-residue chain is DNA polymerase sliding clamp 2 (248 aa).

This sequence belongs to the PCNA family. As to quaternary structure, homotrimer. The subunits circularize to form a toroid; DNA passes through its center. Replication factor C (RFC) is required to load the toroid on the DNA.

Its function is as follows. Sliding clamp subunit that acts as a moving platform for DNA processing. Responsible for tethering the catalytic subunit of DNA polymerase and other proteins to DNA during high-speed replication. This is DNA polymerase sliding clamp 2 from Sulfurisphaera ohwakuensis.